The sequence spans 425 residues: Threonine synthase (425 aa).

The residue at position 105 (Lys-105) is an N6-(pyridoxal phosphate)lysine.

The protein belongs to the threonine synthase family. It depends on pyridoxal 5'-phosphate as a cofactor.

It catalyses the reaction O-phospho-L-homoserine + H2O = L-threonine + phosphate. The protein operates within amino-acid biosynthesis; L-threonine biosynthesis; L-threonine from L-aspartate: step 5/5. Catalyzes the gamma-elimination of phosphate from L-phosphohomoserine and the beta-addition of water to produce L-threonine. The protein is Threonine synthase (thrC) of Haemophilus influenzae (strain ATCC 51907 / DSM 11121 / KW20 / Rd).